Reading from the N-terminus, the 208-residue chain is Heart- and neural crest derivatives-expressed protein 2 (208 aa).

2 disordered regions span residues 79–106 (AGAV…TQSI) and 161–197 (EFKK…RTGW). Residues 88-103 (TVKRRPTANRKERRRT) show a composition bias toward basic residues. A bHLH domain is found at 90–142 (KRRPTANRKERRRTQSINSAFAELRECIPNVPADTKLSKIKTLRLATSYIAYL). Residues 161–178 (EFKKTDAKEERRKKEMND) show a composition bias toward basic and acidic residues.

As to quaternary structure, efficient DNA binding requires dimerization with another bHLH protein.

Its subcellular location is the nucleus. Functionally, essential for myocardial and pectoral fin differentiation, patterning and morphogenesis. This Danio rerio (Zebrafish) protein is Heart- and neural crest derivatives-expressed protein 2 (hand2).